The following is a 160-amino-acid chain: Putative 4-hydroxy-4-methyl-2-oxoglutarate aldolase (160 aa).

Substrate-binding positions include Gly-76–Ile-79 and Arg-98. Asp-99 is an a divalent metal cation binding site.

Belongs to the class II aldolase/RraA-like family. In terms of assembly, homotrimer. A divalent metal cation is required as a cofactor.

It carries out the reaction 4-hydroxy-4-methyl-2-oxoglutarate = 2 pyruvate. The catalysed reaction is oxaloacetate + H(+) = pyruvate + CO2. Functionally, catalyzes the aldol cleavage of 4-hydroxy-4-methyl-2-oxoglutarate (HMG) into 2 molecules of pyruvate. Also contains a secondary oxaloacetate (OAA) decarboxylase activity due to the common pyruvate enolate transition state formed following C-C bond cleavage in the retro-aldol and decarboxylation reactions. The chain is Putative 4-hydroxy-4-methyl-2-oxoglutarate aldolase from Alcanivorax borkumensis (strain ATCC 700651 / DSM 11573 / NCIMB 13689 / SK2).